The following is a 177-amino-acid chain: MAEITTIARPYAKAAFDFALEQKAVESWAEMLNFAALVSENETMQPLLSGSVASGKLAELFIGVCGEQINEQAQNLLKVMAENGRLVVLPAVAQQFVEMQREYAKEVEAQIVSATELTSEQLQALSVSLEKRLARKVKLNCSIDTSLIAGVIITAGDLVIDGSVRGKISRLSDSLQS.

It belongs to the ATPase delta chain family. As to quaternary structure, F-type ATPases have 2 components, F(1) - the catalytic core - and F(0) - the membrane proton channel. F(1) has five subunits: alpha(3), beta(3), gamma(1), delta(1), epsilon(1). F(0) has three main subunits: a(1), b(2) and c(10-14). The alpha and beta chains form an alternating ring which encloses part of the gamma chain. F(1) is attached to F(0) by a central stalk formed by the gamma and epsilon chains, while a peripheral stalk is formed by the delta and b chains.

Its subcellular location is the cell inner membrane. F(1)F(0) ATP synthase produces ATP from ADP in the presence of a proton or sodium gradient. F-type ATPases consist of two structural domains, F(1) containing the extramembraneous catalytic core and F(0) containing the membrane proton channel, linked together by a central stalk and a peripheral stalk. During catalysis, ATP synthesis in the catalytic domain of F(1) is coupled via a rotary mechanism of the central stalk subunits to proton translocation. Functionally, this protein is part of the stalk that links CF(0) to CF(1). It either transmits conformational changes from CF(0) to CF(1) or is implicated in proton conduction. This Shewanella pealeana (strain ATCC 700345 / ANG-SQ1) protein is ATP synthase subunit delta.